The following is a 130-amino-acid chain: Large ribosomal subunit protein bL12 (130 aa).

It belongs to the bacterial ribosomal protein bL12 family. As to quaternary structure, homodimer. Part of the ribosomal stalk of the 50S ribosomal subunit. Forms a multimeric L10(L12)X complex, where L10 forms an elongated spine to which 2 to 4 L12 dimers bind in a sequential fashion. Binds GTP-bound translation factors.

Functionally, forms part of the ribosomal stalk which helps the ribosome interact with GTP-bound translation factors. Is thus essential for accurate translation. The protein is Large ribosomal subunit protein bL12 of Cutibacterium acnes (strain DSM 16379 / KPA171202) (Propionibacterium acnes).